We begin with the raw amino-acid sequence, 321 residues long: Low affinity immunoglobulin epsilon Fc receptor (321 aa).

At 1–21 (MEEGQYSEIEELPRRRCCRRG) the chain is on the cytoplasmic side. Residues Cys-17 and Cys-18 are each lipidated (S-palmitoyl cysteine). Residues 22-47 (TQIVLLGLVTAALWAGLLTLLLLWHW) traverse the membrane as a helical; Signal-anchor for type II membrane protein segment. The Extracellular segment spans residues 48–321 (DTTQSLKQLE…LPTPSAPLHS (274 aa)). N-linked (GlcNAc...) asparagine glycosylation is present at Asn-63. The interval 66–85 (QVSKNLESHHGDQMAQKSQS) is disordered. 3 consecutive repeats follow at residues 69-89 (KNLESHHGDQMAQKSQSTQIS), 90-110 (QELEELRAEQQRLKSQDLELS), and 111-131 (WNLNGLQADLSSFKSQELNER). Intrachain disulfides connect Cys-160–Cys-288, Cys-163–Cys-174, Cys-191–Cys-282, and Cys-259–Cys-273. The C-type lectin domain occupies 162-284 (TCPEKWINFQ…RKLGAWVCDR (123 aa)). Positions 249, 251, 269, and 270 each coordinate Ca(2+). Residues 290-321 (PPASEGSAESMGPDSRPDPDGRLPTPSAPLHS) are disordered. Ser-296 carries O-linked (Xyl...) (chondroitin sulfate) serine glycosylation.

Homotrimer. Interacts (via C-type lectin domain) with IGHE (via CH3 region); this interaction regulates IgE homeostasis. Interacts (via the C-terminus) with CR2/CD21 (via Sushi domain 1 and 2). In terms of processing, N- and O-glycosylated. The secreted form sCD23 is produced by ADAM10-mediated ectodomain shedding. In terms of tissue distribution, detected in urine (at protein level).

It is found in the cell membrane. Its subcellular location is the secreted. Low-affinity receptor for immunoglobulin E (IgE) and CR2/CD21. Has essential roles in the regulation of IgE production and in the differentiation of B cells. On B cells, initiates IgE-dependent antigen uptake and presentation to T cells. On macrophages, upon IgE binding and antigen cross-linking induces intracellular killing of parasites through activation of L-Arginine-nitric oxide pathway. This chain is Low affinity immunoglobulin epsilon Fc receptor (FCER2), found in Homo sapiens (Human).